Here is a 235-residue protein sequence, read N- to C-terminus: Carboxy-S-adenosyl-L-methionine synthase (235 aa).

Residues Tyr35, 60 to 62 (GCS), 83 to 84 (DN), Asn124, and Arg191 contribute to the S-adenosyl-L-methionine site.

This sequence belongs to the class I-like SAM-binding methyltransferase superfamily. Cx-SAM synthase family. As to quaternary structure, homodimer.

The catalysed reaction is prephenate + S-adenosyl-L-methionine = carboxy-S-adenosyl-L-methionine + 3-phenylpyruvate + H2O. Its function is as follows. Catalyzes the conversion of S-adenosyl-L-methionine (SAM) to carboxy-S-adenosyl-L-methionine (Cx-SAM). This is Carboxy-S-adenosyl-L-methionine synthase from Campylobacter jejuni subsp. jejuni serotype O:23/36 (strain 81-176).